The chain runs to 332 residues: NH(3)-dependent NAD(+) synthetase (332 aa).

48–55 (GLSGGVDS) contacts ATP. A Mg(2+)-binding site is contributed by D54. Residue R184 coordinates deamido-NAD(+). An ATP-binding site is contributed by T204. Position 209 (E209) interacts with Mg(2+). Residues K217 and D224 each contribute to the deamido-NAD(+) site. 2 residues coordinate ATP: K233 and T255.

This sequence belongs to the NAD synthetase family. In terms of assembly, homodimer.

The catalysed reaction is deamido-NAD(+) + NH4(+) + ATP = AMP + diphosphate + NAD(+) + H(+). Its pathway is cofactor biosynthesis; NAD(+) biosynthesis; NAD(+) from deamido-NAD(+) (ammonia route): step 1/1. Catalyzes the ATP-dependent amidation of deamido-NAD to form NAD. Uses ammonia as a nitrogen source. The chain is NH(3)-dependent NAD(+) synthetase from Rhizobium rhizogenes (strain K84 / ATCC BAA-868) (Agrobacterium radiobacter).